The chain runs to 261 residues: Ethanolamine ammonia-lyase small subunit (261 aa).

Residues Val157, Glu178, and Cys207 each contribute to the adenosylcob(III)alamin site.

The protein belongs to the EutC family. The basic unit is a heterodimer which dimerizes to form tetramers. The heterotetramers trimerize; 6 large subunits form a core ring with 6 small subunits projecting outwards. The cofactor is adenosylcob(III)alamin.

It is found in the bacterial microcompartment. It carries out the reaction ethanolamine = acetaldehyde + NH4(+). It functions in the pathway amine and polyamine degradation; ethanolamine degradation. In terms of biological role, catalyzes the deamination of various vicinal amino-alcohols to oxo compounds. Allows this organism to utilize ethanolamine as the sole source of nitrogen and carbon in the presence of external vitamin B12. This chain is Ethanolamine ammonia-lyase small subunit, found in Rhodopseudomonas palustris (strain BisA53).